The following is a 316-amino-acid chain: uncharacterized protein (316 aa).

Topologically, residues 1 to 70 are cytoplasmic; sequence SFAYSGNSES…NNDEIGIWNY (70 aa). A helical transmembrane segment spans residues 71–91; that stretch reads ISVAEMGGVLLFLSYWIWTCL. A topological domain (lumenal) is located at residue His-92. Residues 93–113 traverse the membrane as a helical segment; sequence FSKIIFPAQKVICLYIFLFAL. Residues 114–170 lie on the Cytoplasmic side of the membrane; it reads NQTLQECIEEYVFSSECIKYRQFYSVYEIIDFLRTNFYRLFVIYCALGFGITRTVPK. The helical transmembrane segment at 171 to 191 threads the bilayer; the sequence is YLMIKGISIVIALCSVYWISL. At 192-194 the chain is on the lumenal side; that stretch reads YKD. The chain crosses the membrane as a helical span at residues 195–215; that stretch reads VYVVSEIFDMIQYEVSPAIWV. The Cytoplasmic segment spans residues 216–245; the sequence is YSICHLLKQCTSVTTYENASKARFFRRMLN. Residues 246–266 form a helical membrane-spanning segment; the sequence is AFIFIFCASPMLHYLSNIIFG. Residues 267–316 are Lumenal-facing; the sequence is NFDYRLSVIIGDLFTFMEKIAFPCYIMFPTHNEALAYNRNVAEEAQEKMI.

This sequence belongs to the UPF0742 family.

The protein resides in the endoplasmic reticulum. The protein localises to the membrane. This is an uncharacterized protein from Schizosaccharomyces pombe (strain 972 / ATCC 24843) (Fission yeast).